The sequence spans 490 residues: Cytochrome P450 2C20 (490 aa).

Residue cysteine 435 coordinates heme.

Belongs to the cytochrome P450 family. The cofactor is heme.

The protein resides in the endoplasmic reticulum membrane. Its subcellular location is the microsome membrane. It carries out the reaction an organic molecule + reduced [NADPH--hemoprotein reductase] + O2 = an alcohol + oxidized [NADPH--hemoprotein reductase] + H2O + H(+). Functionally, cytochromes P450 are a group of heme-thiolate monooxygenases. In liver microsomes, this enzyme is involved in an NADPH-dependent electron transport pathway. It oxidizes a variety of structurally unrelated compounds, including steroids, fatty acids, and xenobiotics. The polypeptide is Cytochrome P450 2C20 (CYP2C20) (Macaca fascicularis (Crab-eating macaque)).